The chain runs to 741 residues: Zinc finger and BTB domain-containing protein 20 (741 aa).

The segment covering 1 to 17 (MLERKKPKTAENQKASE) has biased composition (basic and acidic residues). A disordered region spans residues 1 to 28 (MLERKKPKTAENQKASEENEITQPGGSS). In terms of domain architecture, BTB spans 104-167 (CDVTVRIHGS…MYSGVLRVSQ (64 aa)). The segment at 203-235 (GIQDSGQDTPRGTPESGTSGQSSDTESGYLQSH) is disordered. Over residues 206 to 235 (DSGQDTPRGTPESGTSGQSSDTESGYLQSH) the composition is skewed to polar residues. At threonine 211 the chain carries Phosphothreonine. Lysine 330 is covalently cross-linked (Glycyl lysine isopeptide (Lys-Gly) (interchain with G-Cter in SUMO1); alternate). Residue lysine 330 forms a Glycyl lysine isopeptide (Lys-Gly) (interchain with G-Cter in SUMO2); alternate linkage. Residues 350–440 (RNESEECTED…SSPERSNESE (91 aa)) are disordered. Serine 353 is modified (phosphoserine). Over residues 354–367 (EECTEDTDQAEGTE) the composition is skewed to acidic residues. Threonine 357 is modified (phosphothreonine). Residue lysine 371 forms a Glycyl lysine isopeptide (Lys-Gly) (interchain with G-Cter in SUMO2) linkage. Low complexity predominate over residues 404-423 (AEPAQPEQAAEAPAESSAQP). 4 consecutive C2H2-type zinc fingers follow at residues 578 to 600 (YECT…MFVH), 606 to 628 (HQCS…MVTH), 634 to 656 (YQCS…MRLH), and 662 to 684 (YECY…VALH). Phosphothreonine occurs at positions 690 and 695. Residues 715 to 737 (YVCSVCPAKFDQIEQFNDHMRMH) form a C2H2-type 5 zinc finger. Lysine 723 is covalently cross-linked (Glycyl lysine isopeptide (Lys-Gly) (interchain with G-Cter in SUMO2)).

As to quaternary structure, can homodimerize. Binds to DNA. Post-translationally, sumoylated with SUMO1. In terms of tissue distribution, specifically expressed in early hippocampal neurons, cerebellar granule cells and gliogenic progenitors as well as in differentiated glia. Expressed in adult and aged myogenic satellite cells.

The protein localises to the nucleus. Its function is as follows. May be a transcription factor that may be involved in hematopoiesis, oncogenesis, and immune responses. Plays a role in postnatal myogenesis, may be involved in the regulation of satellite cells self-renewal. This chain is Zinc finger and BTB domain-containing protein 20 (Zbtb20), found in Mus musculus (Mouse).